Reading from the N-terminus, the 96-residue chain is Co-chaperonin GroES (96 aa).

Belongs to the GroES chaperonin family. In terms of assembly, heptamer of 7 subunits arranged in a ring. Interacts with the chaperonin GroEL.

It localises to the cytoplasm. Together with the chaperonin GroEL, plays an essential role in assisting protein folding. The GroEL-GroES system forms a nano-cage that allows encapsulation of the non-native substrate proteins and provides a physical environment optimized to promote and accelerate protein folding. GroES binds to the apical surface of the GroEL ring, thereby capping the opening of the GroEL channel. The chain is Co-chaperonin GroES from Holospora obtusa.